We begin with the raw amino-acid sequence, 424 residues long: uncharacterized protein (424 aa).

Helical transmembrane passes span 9-29, 41-61, 86-106, 119-139, 148-168, 184-204, 222-242, 270-290, 320-340, 345-365, and 377-397; these read ITWI…GILI, ASLF…GTLA, GAIL…IIAL, ADWQ…LLHM, ISTL…AVSL, WSAA…WEMI, LFLA…VTVG, VTVC…IAGF, VLTA…LFQI, LLKG…AAAL, and MALG…WALL.

The protein belongs to the amino acid-polyamine-organocation (APC) superfamily.

The protein resides in the cell membrane. This is an uncharacterized protein from Bacillus subtilis (strain 168).